The chain runs to 89 residues: Putative membrane protein insertion efficiency factor (89 aa).

A disordered region spans residues 68–89 (VPPPNSDARNAPHEAEASSHRL). The span at 77–89 (NAPHEAEASSHRL) shows a compositional bias: basic and acidic residues.

It belongs to the UPF0161 family.

The protein localises to the cell inner membrane. Could be involved in insertion of integral membrane proteins into the membrane. In Burkholderia mallei (strain SAVP1), this protein is Putative membrane protein insertion efficiency factor.